Here is a 219-residue protein sequence, read N- to C-terminus: Ribose-5-phosphate isomerase A (219 aa).

Residues 28 to 31 (TGST), 81 to 84 (DGAD), and 94 to 97 (KGGG) each bind substrate. The Proton acceptor role is filled by Glu103. Lys121 is a substrate binding site.

It belongs to the ribose 5-phosphate isomerase family. As to quaternary structure, homodimer.

It catalyses the reaction aldehydo-D-ribose 5-phosphate = D-ribulose 5-phosphate. It functions in the pathway carbohydrate degradation; pentose phosphate pathway; D-ribose 5-phosphate from D-ribulose 5-phosphate (non-oxidative stage): step 1/1. Catalyzes the reversible conversion of ribose-5-phosphate to ribulose 5-phosphate. In Shewanella frigidimarina (strain NCIMB 400), this protein is Ribose-5-phosphate isomerase A.